We begin with the raw amino-acid sequence, 250 residues long: Geranylgeranylglyceryl phosphate synthase (250 aa).

Residues Asp-23 and Ser-52 each contribute to the Mg(2+) site. Sn-glycerol 1-phosphate is bound by residues 170–176, 202–203, and 224–225; these read YIEAGSG, GG, and GT.

Belongs to the GGGP/HepGP synthase family. Group II subfamily. Mg(2+) is required as a cofactor.

The protein localises to the cytoplasm. The enzyme catalyses sn-glycerol 1-phosphate + (2E,6E,10E)-geranylgeranyl diphosphate = sn-3-O-(geranylgeranyl)glycerol 1-phosphate + diphosphate. Its pathway is membrane lipid metabolism; glycerophospholipid metabolism. Prenyltransferase that catalyzes the transfer of the geranylgeranyl moiety of geranylgeranyl diphosphate (GGPP) to the C3 hydroxyl of sn-glycerol-1-phosphate (G1P). This reaction is the first ether-bond-formation step in the biosynthesis of archaeal membrane lipids. The chain is Geranylgeranylglyceryl phosphate synthase from Methanobrevibacter smithii (strain ATCC 35061 / DSM 861 / OCM 144 / PS).